The chain runs to 212 residues: Large ribosomal subunit protein uL3 (212 aa).

The disordered stretch occupies residues 134–154 (RKTHGNSVSHRVPGSIGQNQT). Position 153 is an N5-methylglutamine (glutamine 153).

This sequence belongs to the universal ribosomal protein uL3 family. In terms of assembly, part of the 50S ribosomal subunit. Forms a cluster with proteins L14 and L19. Methylated by PrmB.

One of the primary rRNA binding proteins, it binds directly near the 3'-end of the 23S rRNA, where it nucleates assembly of the 50S subunit. The polypeptide is Large ribosomal subunit protein uL3 (Dichelobacter nodosus (strain VCS1703A)).